We begin with the raw amino-acid sequence, 629 residues long: tRNA uridine 5-carboxymethylaminomethyl modification enzyme MnmG (629 aa).

FAD is bound at residue 13–18; that stretch reads GGGHAG. 273–287 contacts NAD(+); it reads GPRYCPSIEDKIMRF.

It belongs to the MnmG family. Homodimer. Heterotetramer of two MnmE and two MnmG subunits. It depends on FAD as a cofactor.

It is found in the cytoplasm. Its function is as follows. NAD-binding protein involved in the addition of a carboxymethylaminomethyl (cmnm) group at the wobble position (U34) of certain tRNAs, forming tRNA-cmnm(5)s(2)U34. This Tolumonas auensis (strain DSM 9187 / NBRC 110442 / TA 4) protein is tRNA uridine 5-carboxymethylaminomethyl modification enzyme MnmG.